Here is a 499-residue protein sequence, read N- to C-terminus: Centrosomal protein of 57 kDa (499 aa).

Polar residues predominate over residues 1–35 (MAAASVSETSASQFSNILAEPSKSNGSMVRHSSSP). Positions 1–58 (MAAASVSETSASQFSNILAEPSKSNGSMVRHSSSPYVVYPPDKPFLNSDLRRSPNKPT) are disordered. Ser-53 is subject to Phosphoserine. The centrosome localization domain (CLD) stretch occupies residues 58–239 (TFAYPESNSR…KAAQLQTGLE (182 aa)). A coiled-coil region spans residues 63–241 (ESNSRAIFSA…AQLQTGLEVN (179 aa)). The segment at 277–490 (AVQPHYRLCL…KDMQSIQNSL (214 aa)) is mediates interaction with microtubules. Disordered regions lie at residues 334-357 (KQVSSRTGKSKKSATPPSSSSVNE) and 431-476 (KQKK…SRKN). Residues 346–357 (SATPPSSSSVNE) are compositionally biased toward low complexity. Residues 389–450 (TVELKDNLEC…KTLDEEGNSS (62 aa)) are a coiled coil. The span at 431–444 (KQKKELKATRKTLD) shows a compositional bias: basic and acidic residues. Low complexity predominate over residues 449 to 459 (SSSRSTTTGTT). Residues 460–474 (NKKDFAKPRPGEKSR) are compositionally biased toward basic and acidic residues.

The protein belongs to the translokin family. Homodimer and homooligomer. Interacts with FGF2 and RAP80. Does not interact with FGF1 or FGF2 isoform 24 kDa. Interacts with microtubules.

The protein localises to the nucleus. It localises to the cytoplasm. Its subcellular location is the cytoskeleton. It is found in the microtubule organizing center. The protein resides in the centrosome. Functionally, centrosomal protein which may be required for microtubule attachment to centrosomes. May act by forming ring-like structures around microtubules. Mediates nuclear translocation and mitogenic activity of the internalized growth factor FGF2. The protein is Centrosomal protein of 57 kDa (CEP57) of Bos taurus (Bovine).